Reading from the N-terminus, the 494-residue chain is DEAD-box ATP-dependent RNA helicase 20 (494 aa).

Over residues 1 to 20 (MSRFDGRAADPGSYRDRRSE) the composition is skewed to basic and acidic residues. The tract at residues 1–39 (MSRFDGRAADPGSYRDRRSEGAFGGGTRAFAPTSKADSA) is disordered. A compositionally biased stretch (low complexity) spans 29-39 (AFAPTSKADSA). A Q motif motif is present at residues 91–119 (REFRDVGFPEYVLQEITKAGFVEPTPIQS). In terms of domain architecture, Helicase ATP-binding spans 122 to 297 (WPMALRGRDL…RNFLFDPYKV (176 aa)). 135-142 (AETGSGKT) contributes to the ATP binding site. A DEAD box motif is present at residues 245–248 (DEAD). The Helicase C-terminal domain occupies 325 to 470 (KLVNLLEDIM…KVSPELANMG (146 aa)). Positions 465–494 (ELANMGRGAPPPSSGHRDRYRGYGGGRSWS) are disordered.

It belongs to the DEAD box helicase family. DDX5/DBP2 subfamily.

Its subcellular location is the nucleus. It carries out the reaction ATP + H2O = ADP + phosphate + H(+). In terms of biological role, ATP-dependent RNA helicase involved nonsense-mediated mRNA decay and ribosome biogenesis through rRNA processing. The chain is DEAD-box ATP-dependent RNA helicase 20 from Oryza sativa subsp. japonica (Rice).